Consider the following 121-residue polypeptide: Small ribosomal subunit protein uS13 (121 aa).

Residues 94–121 form a disordered region; the sequence is GLPVRGQSSKTNARTVKGPRKTVANKKK. The segment covering 110–121 has biased composition (basic residues); that stretch reads KGPRKTVANKKK.

The protein belongs to the universal ribosomal protein uS13 family. In terms of assembly, part of the 30S ribosomal subunit. Forms a loose heterodimer with protein S19. Forms two bridges to the 50S subunit in the 70S ribosome.

Functionally, located at the top of the head of the 30S subunit, it contacts several helices of the 16S rRNA. In the 70S ribosome it contacts the 23S rRNA (bridge B1a) and protein L5 of the 50S subunit (bridge B1b), connecting the 2 subunits; these bridges are implicated in subunit movement. Contacts the tRNAs in the A and P-sites. The polypeptide is Small ribosomal subunit protein uS13 (Mesoplasma florum (strain ATCC 33453 / NBRC 100688 / NCTC 11704 / L1) (Acholeplasma florum)).